The primary structure comprises 186 residues: Probable nicotinate-nucleotide adenylyltransferase (186 aa).

Belongs to the NadD family.

It carries out the reaction nicotinate beta-D-ribonucleotide + ATP + H(+) = deamido-NAD(+) + diphosphate. It functions in the pathway cofactor biosynthesis; NAD(+) biosynthesis; deamido-NAD(+) from nicotinate D-ribonucleotide: step 1/1. Catalyzes the reversible adenylation of nicotinate mononucleotide (NaMN) to nicotinic acid adenine dinucleotide (NaAD). In Thermus thermophilus (strain ATCC 27634 / DSM 579 / HB8), this protein is Probable nicotinate-nucleotide adenylyltransferase.